The following is a 129-amino-acid chain: Calcitonin gene-related peptide 2 (129 aa).

The first 25 residues, 1-25 (MGFGKPSSFLAFSILVLCQAGSLQA), serve as a signal peptide directing secretion. Residues 26–81 (QPLRSSLESLPDPAALSEKEGRLLLAALVKAYVQRKTNELEQEQEQEMEGSSLTAQ) constitute a propeptide that is removed on maturation. Cysteines 85 and 90 form a disulfide. A Phenylalanine amide modification is found at Phe-120. The propeptide occupies 126 to 129 (DLQA).

It belongs to the calcitonin family.

It is found in the secreted. CALCB/CGRP2 is a peptide hormone that induces vasodilation mediated by the CALCRL-RAMP1 receptor complex. Dilates a variety of vessels including the coronary, cerebral and systemic vasculature. Its abundance in the CNS also points toward a neurotransmitter or neuromodulator role. The protein is Calcitonin gene-related peptide 2 (CALCB) of Equus caballus (Horse).